Reading from the N-terminus, the 592-residue chain is Inactive heparanase-2 (592 aa).

An N-terminal signal peptide occupies residues 1 to 41 (MRVLCAFPEAMPSSNSRPPACLAPGALYLALLLHLSLSSQA). N-linked (GlcNAc...) asparagine glycosylation is found at asparagine 254 and asparagine 392.

The protein belongs to the glycosyl hydrolase 79 family. In terms of assembly, interacts with HPSE. Interacts with SDC1 (via glycan chains). In terms of tissue distribution, widely expressed, with the highest expression in brain, mammary gland, prostate, small intestine, testis and uterus. In the central nervous system, expressed in the spinal cord, caudate nucleus, thalamus, substantia nigra, medulla oblongata, putamen and pons. In the urinary bladder, expressed in longitudinal and circular layers of detrusor muscle. Found both in normal and cancer tissues.

Its subcellular location is the secreted. It localises to the extracellular space. The protein resides in the extracellular matrix. Its function is as follows. Binds heparin and heparan sulfate with high affinity, but lacks heparanase activity. Inhibits HPSE, possibly by competing for its substrates (in vitro). The protein is Inactive heparanase-2 (HPSE2) of Homo sapiens (Human).